A 570-amino-acid polypeptide reads, in one-letter code: MSTTSRTLITSAIPYINGIKHLGNLVGSQLPADLYARYLRARGQEVLFLCATDEHGTPAELAAAKAGKPVAEYCADMHAVQAEIARGFRLSFDHFGRSSSPQNHALTQHFAGKLADAGLIAEVEEKQVYSHADGRFLPDRYIEGTCPNCGYDKARGDQCENCTKQLDPTDLINPRSAISGSTDLEVRETKHLYLRQSQLRGQLSDWISSKTDWPILTTSIAKKWLNDGDGLQDRGITRDLDWGVPVKRGDADWPGMEGKVFYVWFDAPIEYIACAAEAVEEGSISDWERWWRVDKGADDVRYVQFMGKDNVPFHTLSFPATILGSGEPWKLVDYIKSFNYLNYDGGQFSTSQGRGVFMDQALEILPSDYWRWWLLSHAPETSDAEFTWEAFQQDVNKDLADVLGNFVSRITKFCRSKFGEVVPEGGDYGPQETALIADLDKRLAAYQTHMDAIDIRKAAAELRAIWVAGNEYLQSAAPWTAFKTDPDRAAAITRFALNLIPFYAGLSAPFIPDAAQAMAEGMHTNLTWPKDARLTTLPAGHAFTVPDVLFAKIADEQREDWAARFSGVRD.

Residues 14–24 (PYINGIKHLGN) carry the 'HIGH' region motif. Residues Cys146, Cys149, Cys159, and Cys162 each contribute to the Zn(2+) site. The 'KMSKS' region signature appears at 347–351 (QFSTS). ATP is bound at residue Thr350.

Belongs to the class-I aminoacyl-tRNA synthetase family. MetG type 1 subfamily. As to quaternary structure, monomer. It depends on Zn(2+) as a cofactor.

Its subcellular location is the cytoplasm. The enzyme catalyses tRNA(Met) + L-methionine + ATP = L-methionyl-tRNA(Met) + AMP + diphosphate. Is required not only for elongation of protein synthesis but also for the initiation of all mRNA translation through initiator tRNA(fMet) aminoacylation. The protein is Methionine--tRNA ligase of Jannaschia sp. (strain CCS1).